The following is a 456-amino-acid chain: Phospholipase A1 member A (456 aa).

The N-terminal stretch at 1 to 25 is a signal peptide; sequence MPPDFWERCFWLWGLLLWLSVGSTG. The N-linked (GlcNAc...) asparagine glycan is linked to Asn34. Catalysis depends on Ser166, which acts as the Nucleophile. The active-site Charge relay system is Asp190. Cys245 and Cys258 are oxidised to a cystine. The active-site Charge relay system is the His260. 2 disulfides stabilise this stretch: Cys282-Cys293 and Cys296-Cys304.

It belongs to the AB hydrolase superfamily. Lipase family.

It localises to the secreted. The enzyme catalyses a 1,2-diacyl-sn-glycero-3-phospho-L-serine + H2O = a 2-acyl-sn-glycero-3-phospho-L-serine + a fatty acid + H(+). It catalyses the reaction 1,2-di-(9Z)-octadecenoyl-sn-glycero-3-phospho-L-serine + H2O = 2-(9Z-octadecenoyl)-sn-glycero-3-phospho-L-serine + (9Z)-octadecenoate + H(+). The catalysed reaction is 1-hexadecanoyl-2-(5Z,8Z,11Z,14Z-eicosatetraenoyl)-sn-glycero-3-phospho-L-serine + H2O = 2-(5Z,8Z,11Z,14Z)-eicosatetraenoyl-sn-glycero-3-phospho-L-serine + hexadecanoate + H(+). It carries out the reaction a 1-acyl-sn-glycero-3-phospho-L-serine + H2O = sn-glycero-3-phospho-L-serine + a fatty acid + H(+). The enzyme catalyses 1-(9Z-octadecenoyl)-sn-glycero-3-phospho-L-serine + H2O = sn-glycero-3-phospho-L-serine + (9Z)-octadecenoate + H(+). Functionally, hydrolyzes the ester bond of the acyl group attached at the sn-1 position of phosphatidylserines (phospholipase A1 activity) and 1-acyl-2-lysophosphatidylserines (lysophospholipase activity) in the pathway of phosphatidylserines acyl chain remodeling. Cleaves phosphatidylserines exposed on the outer leaflet of the plasma membrane of apoptotic cells producing 2-acyl-1-lysophosphatidylserines, which in turn enhance mast cell activation and histamine production. Has no activity toward other glycerophospholipids including phosphatidylcholines, phosphatidylethanolamines, phosphatidic acids or phosphatidylinositols, or glycerolipids such as triolein. This Bos taurus (Bovine) protein is Phospholipase A1 member A (PLA1A).